A 204-amino-acid polypeptide reads, in one-letter code: MSYEYGTGATAVGIRGAGYVVLAAEKRVSYGGFIISKTARKVYKITDYLGLALAGLFADLQAISKILRAEIEYYNIVTGRRISVRAVARLLATILYSYKYYPFLSETLVGGLEADGTAKLYVMDPLGSLIEDDYAAIGSGAPIAIGILENGYSKDMSVDDAKKLAIAAVRAAIERDAMSGDGIDLLVIRREEDSIKAEEESITI.

The propeptide at 1 to 9 (MSYEYGTGA) is removed in mature form; by autocatalysis. Threonine 10 (nucleophile) is an active-site residue.

Belongs to the peptidase T1B family. The 20S proteasome core is composed of 14 alpha and 14 beta subunits that assemble into four stacked heptameric rings, resulting in a barrel-shaped structure. The two inner rings, each composed of seven catalytic beta subunits, are sandwiched by two outer rings, each composed of seven alpha subunits. The catalytic chamber with the active sites is on the inside of the barrel. Has a gated structure, the ends of the cylinder being occluded by the N-termini of the alpha-subunits. Is capped at one or both ends by the proteasome regulatory ATPase, PAN.

The protein resides in the cytoplasm. It catalyses the reaction Cleavage of peptide bonds with very broad specificity.. With respect to regulation, the formation of the proteasomal ATPase PAN-20S proteasome complex, via the docking of the C-termini of PAN into the intersubunit pockets in the alpha-rings, triggers opening of the gate for substrate entry. Interconversion between the open-gate and close-gate conformations leads to a dynamic regulation of the 20S proteasome proteolysis activity. Component of the proteasome core, a large protease complex with broad specificity involved in protein degradation. This Hyperthermus butylicus (strain DSM 5456 / JCM 9403 / PLM1-5) protein is Proteasome subunit beta 1.